The primary structure comprises 756 residues: U3 small nucleolar RNA-associated protein 14 homolog B (756 aa).

Residues Asp21–Gln44 are disordered. 3 positions are modified to phosphoserine: Ser29, Ser31, and Ser37. Coiled-coil stretches lie at residues Ser215–Lys244 and Pro316–Glu345. Basic and acidic residues-rich tracts occupy residues Lys419–Asp428 and Leu452–Glu468. Disordered regions lie at residues Lys419–Glu468 and Gln497–Lys539. Positions Leu449–Glu476 form a coiled coil. Ser554 carries the post-translational modification Phosphoserine.

This sequence belongs to the UTP14 family. In terms of tissue distribution, expressed predominantly in germ cells of the testis; weakly expressed in brain.

The protein localises to the nucleus. The protein resides in the nucleolus. Its function is as follows. Essential for spermatogenesis. May be required specifically for ribosome biogenesis and hence protein synthesis during male meiosis. The polypeptide is U3 small nucleolar RNA-associated protein 14 homolog B (Utp14b) (Mus musculus (Mouse)).